The chain runs to 154 residues: D-aminoacyl-tRNA deacylase (154 aa).

The Gly-cisPro motif, important for rejection of L-amino acids signature appears at 138–139; it reads GP.

It belongs to the DTD family. As to quaternary structure, homodimer.

The protein localises to the cytoplasm. The enzyme catalyses glycyl-tRNA(Ala) + H2O = tRNA(Ala) + glycine + H(+). The catalysed reaction is a D-aminoacyl-tRNA + H2O = a tRNA + a D-alpha-amino acid + H(+). Functionally, an aminoacyl-tRNA editing enzyme that deacylates mischarged D-aminoacyl-tRNAs. Also deacylates mischarged glycyl-tRNA(Ala), protecting cells against glycine mischarging by AlaRS. Acts via tRNA-based rather than protein-based catalysis; rejects L-amino acids rather than detecting D-amino acids in the active site. By recycling D-aminoacyl-tRNA to D-amino acids and free tRNA molecules, this enzyme counteracts the toxicity associated with the formation of D-aminoacyl-tRNA entities in vivo and helps enforce protein L-homochirality. The chain is D-aminoacyl-tRNA deacylase from Halorhodospira halophila (strain DSM 244 / SL1) (Ectothiorhodospira halophila (strain DSM 244 / SL1)).